Reading from the N-terminus, the 213-residue chain is mRNA-decapping protein D9 (213 aa).

In terms of domain architecture, Nudix hydrolase spans 30-209; sequence KDTHVFAACI…EYLSYIYNML (180 aa). Positions 111-132 match the Nudix box motif; sequence GKLDKKESIKDCLRRELKEESD. Position 117 (glutamate 117) interacts with Mg(2+). Residue glutamate 126 is the Nucleophile of the active site. Mg(2+) contacts are provided by glutamate 130 and aspartate 151.

Belongs to the Nudix hydrolase family. Requires Mg(2+) as cofactor. The cofactor is Mn(2+).

Its function is as follows. Decapping enzyme required for the removal of the 5'-end m7GpppN cap tethered to viral and host mRNAs to allow their decay in cells. May therefore accelerate viral and cellular mRNA turnover to eliminate competing host mRNAs and allow stage-specific synthesis of viral proteins. Acceleration of the turnover of cellular transcripts may even promote the shutoff of host protein synthesis. Does not cleave unmethylated RNAs or RNAs shorter than 24 nucleotides. This chain is mRNA-decapping protein D9, found in Homo sapiens (Human).